The sequence spans 755 residues: Diamine oxidase [copper-containing] (755 aa).

An N-terminal signal peptide occupies residues 1–24; that stretch reads MGRGTLALGWAGAALLLLQMLAAA. The N-linked (GlcNAc...) asparagine glycan is linked to asparagine 115. Cysteines 182 and 186 form a disulfide. The active-site Proton acceptor is the aspartate 376. A disulfide bond links cysteine 394 and cysteine 420. Tyrosine 464 acts as the Schiff-base intermediate with substrate; via topaquinone in catalysis. Position 464 is a 2',4',5'-topaquinone (tyrosine 464). 2 residues coordinate Cu(2+): histidine 513 and histidine 515. Ca(2+) contacts are provided by aspartate 522, leucine 523, and aspartate 524. An N-linked (GlcNAc...) asparagine glycan is attached at asparagine 541. Ca(2+) is bound by residues glutamate 565, phenylalanine 656, asparagine 659, glutamate 661, aspartate 667, and leucine 668. Histidine 678 serves as a coordination point for Cu(2+). N-linked (GlcNAc...) asparagine glycosylation occurs at asparagine 749.

Belongs to the copper/topaquinone oxidase family. As to quaternary structure, homodimer; disulfide-linked. Requires Cu(2+) as cofactor. The cofactor is Ca(2+). L-topaquinone is required as a cofactor. In terms of processing, topaquinone (TPQ) is generated by copper-dependent autoxidation of a specific tyrosyl residue. Post-translationally, N-glycosylated; the glycans are primarily linear, di-, or tribranched fucosylated complex type.

The protein resides in the secreted. The protein localises to the extracellular space. It is found in the cell membrane. The catalysed reaction is histamine + O2 + H2O = imidazole-4-acetaldehyde + H2O2 + NH4(+). It carries out the reaction N(tau)-methylhistamine + O2 + H2O = 1-methylimidazole-4-acetaldehyde + H2O2 + NH4(+). The enzyme catalyses putrescine + O2 + H2O = 4-aminobutanal + H2O2 + NH4(+). It catalyses the reaction cadaverine + O2 + H2O = 5-aminopentanal + H2O2 + NH4(+). With respect to regulation, inhibited by amiloride and amiloride analogs. Functionally, catalyzes the oxidative deamination of primary amines to the corresponding aldehydes with the concomitant production of hydrogen peroxide and ammonia. Its preferred substrates in vitro are the diamines histamine and 1-methylhistamine and it could therefore play a role in allergic and immune responses. Has a broad specificity for diamines and can also act on cadaverine and putrescine, two products of amino acid catabolism. It could also act on polyamines, like spermidine and spermine though less efficiently, and regulate various biological processes. This chain is Diamine oxidase [copper-containing], found in Sus scrofa (Pig).